The sequence spans 385 residues: GDSL esterase/lipase 5 (385 aa).

A signal peptide spans 1-35 (MRESTLMEKVTRRTISSFIFFIVSSTILFLAGKSS). Asn-45 carries N-linked (GlcNAc...) asparagine glycosylation. Ser-55 acts as the Nucleophile in catalysis. N-linked (GlcNAc...) asparagine glycosylation is found at Asn-66, Asn-194, Asn-211, and Asn-289. Catalysis depends on residues Asp-345 and His-348.

It belongs to the 'GDSL' lipolytic enzyme family.

The protein resides in the secreted. This Arabidopsis thaliana (Mouse-ear cress) protein is GDSL esterase/lipase 5 (GLIP5).